A 688-amino-acid chain; its full sequence is Glycine--tRNA ligase beta subunit (688 aa).

The protein belongs to the class-II aminoacyl-tRNA synthetase family. In terms of assembly, tetramer of two alpha and two beta subunits.

Its subcellular location is the cytoplasm. The catalysed reaction is tRNA(Gly) + glycine + ATP = glycyl-tRNA(Gly) + AMP + diphosphate. This chain is Glycine--tRNA ligase beta subunit, found in Clostridioides difficile (strain 630) (Peptoclostridium difficile).